A 329-amino-acid chain; its full sequence is L-threonine dehydratase catabolic TdcB (329 aa).

53–54 (RT) provides a ligand contact to AMP. At K58 the chain carries N6-(pyridoxal phosphate)lysine. Residues Q88, 119 to 120 (DY), and N314 contribute to the AMP site.

The protein belongs to the serine/threonine dehydratase family. As to quaternary structure, in the native structure, TdcB is in a dimeric form, whereas in the TdcB-AMP complex, it exists in a tetrameric form (dimer of dimers). Requires pyridoxal 5'-phosphate as cofactor.

The enzyme catalyses L-threonine = 2-oxobutanoate + NH4(+). It catalyses the reaction L-serine = pyruvate + NH4(+). Its pathway is amino-acid degradation; L-threonine degradation via propanoate pathway; propanoate from L-threonine: step 1/4. Its activity is regulated as follows. Each protein molecule can bind up to four molecules of AMP, which act as an allosteric activator to the enzyme. Functionally, catalyzes the anaerobic formation of alpha-ketobutyrate and ammonia from threonine in a two-step reaction. The first step involved a dehydration of threonine and a production of enamine intermediates (aminocrotonate), which tautomerizes to its imine form (iminobutyrate). Both intermediates are unstable and short-lived. The second step is the nonenzymatic hydrolysis of the enamine/imine intermediates to form 2-ketobutyrate and free ammonia. In the low water environment of the cell, the second step is accelerated by RidA. TdcB also dehydrates serine to yield pyruvate via analogous enamine/imine intermediates. This Escherichia coli O157:H7 protein is L-threonine dehydratase catabolic TdcB (tdcB).